The primary structure comprises 352 residues: B1 bradykinin receptor (352 aa).

The Extracellular portion of the chain corresponds to 1-41 (MASWPPLELQSSNQSQLFPQNATACDNAPEAWDLLHRVLPT). N-linked (GlcNAc...) asparagine glycosylation is found at asparagine 13 and asparagine 21. A helical transmembrane segment spans residues 42 to 62 (FIISICSFGLLGNLFVLLVFL). At 63–72 (LPRRRLNVAE) the chain is on the cytoplasmic side. The chain crosses the membrane as a helical span at residues 73-93 (IYLANLAASDLVFVLGLPFWA). Topologically, residues 94-110 (ENIWNQFNWPFGALLCR) are extracellular. Residues cysteine 109 and cysteine 188 are joined by a disulfide bond. The chain crosses the membrane as a helical span at residues 111-131 (GINGVIKANLFISIFLVVAIS). Residues 132–153 (QDRYCLLVHPMASRRRQRRRQA) are Cytoplasmic-facing. Residues 154–174 (RVTCVLIWVVGGLLSIPTFLL) form a helical membrane-spanning segment. The Extracellular segment spans residues 175 to 206 (RSIQAVPDLNITACILLLPHEAWHFARIVELN). Asparagine 184 carries N-linked (GlcNAc...) asparagine glycosylation. The chain crosses the membrane as a helical span at residues 207-227 (ILAFLLPLAAIVFFNYHILAS). The Cytoplasmic portion of the chain corresponds to 228-250 (LRGREEVSRTRCGGRKDSKTTAL). The chain crosses the membrane as a helical span at residues 251–271 (ILTLVVAFLVCWAPYHFFAFL). Over 272–294 (EFLFQVQAIRGCFWEDFIDLGLQ) the chain is Extracellular. A helical transmembrane segment spans residues 295–315 (LANFLAFTNSSLNPVIYVFVG). Topologically, residues 316 to 352 (RLFRTKVWELYKQCTPKSLAPISSSHRKEIFQLFWRN) are cytoplasmic. Cysteine 329 carries S-palmitoyl cysteine lipidation.

This sequence belongs to the G-protein coupled receptor 1 family. Bradykinin receptor subfamily. BDKRB1 sub-subfamily.

Its subcellular location is the cell membrane. This is a receptor for bradykinin. Could be a factor in chronic pain and inflammation. The sequence is that of B1 bradykinin receptor (BDKRB1) from Chlorocebus aethiops (Green monkey).